Reading from the N-terminus, the 128-residue chain is Large ribosomal subunit protein bL12 (128 aa).

This sequence belongs to the bacterial ribosomal protein bL12 family. As to quaternary structure, homodimer. Part of the ribosomal stalk of the 50S ribosomal subunit. Forms a multimeric L10(L12)X complex, where L10 forms an elongated spine to which 2 to 4 L12 dimers bind in a sequential fashion. Binds GTP-bound translation factors.

Its function is as follows. Forms part of the ribosomal stalk which helps the ribosome interact with GTP-bound translation factors. Is thus essential for accurate translation. In Kocuria rhizophila (strain ATCC 9341 / DSM 348 / NBRC 103217 / DC2201), this protein is Large ribosomal subunit protein bL12.